Here is a 314-residue protein sequence, read N- to C-terminus: Taste receptor type 2 member 42 (314 aa).

Residues 1-7 (MATELDK) lie on the Extracellular side of the membrane. The helical transmembrane segment at 8–28 (IFLTLAIVEFIIGMLGNVFIG) threads the bilayer. Topologically, residues 29–50 (LANCSEGIKNQKVFSVDFILTC) are cytoplasmic. Residues 51 to 71 (LAISTIGHLLVILFDSHVAGL) traverse the membrane as a helical segment. Residues 72 to 101 (APHLYATDRVVRPVTVLWHMTNHLTTWLAT) lie on the Extracellular side of the membrane. A helical transmembrane segment spans residues 102–122 (CLSIFYFFKIAHFPHSLFLWL). Residues 123–127 (RWRMN) are Cytoplasmic-facing. A helical transmembrane segment spans residues 128–148 (RVIAILLTLSLFLLIFDCLVL). The Extracellular portion of the chain corresponds to 149–187 (EMFIDISLNIIDKSNLTLYLDESKTPYDKLFLLKTLLSL). N-linked (GlcNAc...) asparagine glycosylation is present at Asn-163. The helical transmembrane segment at 188–208 (NSFIPFSLCLTSLLFLFLSLV) threads the bilayer. Topologically, residues 209-238 (RHTRNLKLSSLGSRDSSTEAHRRAMKMVMS) are cytoplasmic. Residues 239-259 (FLFLFIVHFFSLQVANWTFCI) form a helical membrane-spanning segment. The Extracellular segment spans residues 260–265 (LGNNKY). Residues 266-286 (TQFVMLALHAFPSCHSFILIL) form a helical membrane-spanning segment. Topologically, residues 287 to 314 (GNSKLRQTAVRLLWHLRNYTKRPNPLPL) are cytoplasmic.

This sequence belongs to the G-protein coupled receptor T2R family.

The protein localises to the membrane. Its function is as follows. Receptor that may play a role in the perception of bitterness and is gustducin-linked. May play a role in sensing the chemical composition of the gastrointestinal content. The activity of this receptor may stimulate alpha gustducin, mediate PLC-beta-2 activation and lead to the gating of TRPM5. The polypeptide is Taste receptor type 2 member 42 (TAS2R42) (Papio hamadryas (Hamadryas baboon)).